The chain runs to 782 residues: Pyridoxal-dependent decarboxylase domain-containing protein 1 (782 aa).

The span at 26 to 48 (ILEDNQRPSEEEKDGKKYTRKDI) shows a compositional bias: basic and acidic residues. Disordered stretches follow at residues 26-56 (ILED…QGSG), 673-695 (QTTG…AGQK), 702-721 (RNSD…EVES), and 726-782 (PMPE…DSLR). Polar residues-rich tracts occupy residues 703 to 714 (NSDAMSETSSIS) and 747 to 782 (AEQS…DSLR).

The protein belongs to the group II decarboxylase family. It depends on pyridoxal 5'-phosphate as a cofactor.

This Xenopus laevis (African clawed frog) protein is Pyridoxal-dependent decarboxylase domain-containing protein 1 (pdxdc1).